The primary structure comprises 452 residues: UDP-N-acetylmuramate--L-alanine ligase (452 aa).

119-125 (GAHGKTS) lines the ATP pocket.

Belongs to the MurCDEF family.

The protein localises to the cytoplasm. The enzyme catalyses UDP-N-acetyl-alpha-D-muramate + L-alanine + ATP = UDP-N-acetyl-alpha-D-muramoyl-L-alanine + ADP + phosphate + H(+). It functions in the pathway cell wall biogenesis; peptidoglycan biosynthesis. Functionally, cell wall formation. The protein is UDP-N-acetylmuramate--L-alanine ligase of Streptococcus mutans serotype c (strain ATCC 700610 / UA159).